The sequence spans 157 residues: Phosphopantetheine adenylyltransferase (157 aa).

Ser-8 is a binding site for substrate. Residues 8 to 9 (SF) and His-16 each bind ATP. Residues Lys-40, Thr-72, and Arg-86 each coordinate substrate. Residues 87-89 (GLR), Glu-97, and 122-128 (HSFLSSS) contribute to the ATP site.

Belongs to the bacterial CoaD family. In terms of assembly, homohexamer. It depends on Mg(2+) as a cofactor.

Its subcellular location is the cytoplasm. It catalyses the reaction (R)-4'-phosphopantetheine + ATP + H(+) = 3'-dephospho-CoA + diphosphate. The protein operates within cofactor biosynthesis; coenzyme A biosynthesis; CoA from (R)-pantothenate: step 4/5. Functionally, reversibly transfers an adenylyl group from ATP to 4'-phosphopantetheine, yielding dephospho-CoA (dPCoA) and pyrophosphate. This chain is Phosphopantetheine adenylyltransferase, found in Prochlorococcus marinus (strain MIT 9313).